Consider the following 589-residue polypeptide: Phenylalanine--tRNA ligase beta subunit (589 aa).

A B5 domain is found at 290–368 (LNPTCFKADI…IAYGYDNLKH (79 aa)). Positions 346, 352, 355, and 356 each coordinate Mg(2+).

This sequence belongs to the phenylalanyl-tRNA synthetase beta subunit family. Type 2 subfamily. In terms of assembly, tetramer of two alpha and two beta subunits. Mg(2+) serves as cofactor.

It is found in the cytoplasm. It localises to the nucleus. It catalyses the reaction tRNA(Phe) + L-phenylalanine + ATP = L-phenylalanyl-tRNA(Phe) + AMP + diphosphate + H(+). In Schizosaccharomyces pombe (strain 972 / ATCC 24843) (Fission yeast), this protein is Phenylalanine--tRNA ligase beta subunit (frs1).